The sequence spans 316 residues: Pantothenate kinase (316 aa).

G95–S102 contacts ATP.

It belongs to the prokaryotic pantothenate kinase family.

It localises to the cytoplasm. The enzyme catalyses (R)-pantothenate + ATP = (R)-4'-phosphopantothenate + ADP + H(+). The protein operates within cofactor biosynthesis; coenzyme A biosynthesis; CoA from (R)-pantothenate: step 1/5. The sequence is that of Pantothenate kinase from Yersinia pseudotuberculosis serotype O:3 (strain YPIII).